Consider the following 185-residue polypeptide: MINQIDIKTRERMEACIQTFHNNITNIKTGRASPTLLHNIYIEYFGSKTPLRQVSNIIVEDSHTLKINVFDDSITSLIRKSILNSNLDLNPVLQGKDIIIPIPRLTEERRKQLIKVIRGDAESSRIQIRNIRRDANDKVKRLLKDKIISEDNEHTSQSKIQIMTNEYIKKIDCILEKKEKELMKF.

Belongs to the RRF family.

Its subcellular location is the cytoplasm. Responsible for the release of ribosomes from messenger RNA at the termination of protein biosynthesis. May increase the efficiency of translation by recycling ribosomes from one round of translation to another. In Buchnera aphidicola subsp. Acyrthosiphon pisum (strain APS) (Acyrthosiphon pisum symbiotic bacterium), this protein is Ribosome-recycling factor.